Consider the following 264-residue polypeptide: Type III pantothenate kinase (264 aa).

6–13 (DVGNTNIK) contributes to the ATP binding site. Position 108 to 111 (108 to 111 (GSDR)) interacts with substrate. D110 serves as the catalytic Proton acceptor. T134 is an ATP binding site.

The protein belongs to the type III pantothenate kinase family. As to quaternary structure, homodimer. Requires NH4(+) as cofactor. K(+) serves as cofactor.

It is found in the cytoplasm. It catalyses the reaction (R)-pantothenate + ATP = (R)-4'-phosphopantothenate + ADP + H(+). It functions in the pathway cofactor biosynthesis; coenzyme A biosynthesis; CoA from (R)-pantothenate: step 1/5. Its function is as follows. Catalyzes the phosphorylation of pantothenate (Pan), the first step in CoA biosynthesis. The protein is Type III pantothenate kinase of Ehrlichia canis (strain Jake).